Here is a 104-residue protein sequence, read N- to C-terminus: L-rhamnose mutarotase (104 aa).

Tyrosine 18 is a substrate binding site. Histidine 22 acts as the Proton donor in catalysis. Substrate-binding positions include tyrosine 41 and 76 to 77; that span reads WW.

The protein belongs to the rhamnose mutarotase family. As to quaternary structure, homodimer.

It is found in the cytoplasm. The enzyme catalyses alpha-L-rhamnose = beta-L-rhamnose. It functions in the pathway carbohydrate metabolism; L-rhamnose metabolism. Involved in the anomeric conversion of L-rhamnose. This is L-rhamnose mutarotase from Escherichia fergusonii (strain ATCC 35469 / DSM 13698 / CCUG 18766 / IAM 14443 / JCM 21226 / LMG 7866 / NBRC 102419 / NCTC 12128 / CDC 0568-73).